Here is a 260-residue protein sequence, read N- to C-terminus: Mitochondrial import inner membrane translocase subunit Tim29 (260 aa).

The N-terminal 31 residues, 1–31 (MAAAALRRFWSRRRAEAGDAVVAKPGVWARL), are a transit peptide targeting the mitochondrion. Over 32 to 59 (GSWARALLRDYAEACRDASAEARARPGR) the chain is Mitochondrial matrix. The chain crosses the membrane as a helical span at residues 60–77 (AAVYVGLLGGAAACFTLA). Residues 78–260 (PSEGAFEEAL…HSLVQAEAPR (183 aa)) are Mitochondrial intermembrane-facing.

In terms of assembly, component of the TIM22 complex, which core is composed of TIMM22, associated with TIMM10 (TIMM10A and/or TIMM10B), TIMM9, AGK and TIMM29. Interacts with TIMM10B; the interaction is direct. Interacts with TOMM40; linking the TIM22 complex to the TOM complex. Interacts with TIMM22 (when oxidized); the interaction is direct.

It localises to the mitochondrion inner membrane. Component of the TIM22 complex, a complex that mediates the import and insertion of multi-pass transmembrane proteins into the mitochondrial inner membrane. The TIM22 complex forms a twin-pore translocase that uses the membrane potential as the external driving force. Required for the stability of the TIM22 complex and functions in the assembly of the TIMM22 protein into the TIM22 complex. May facilitate cooperation between TIM22 and TOM complexes by interacting with TOMM40. This is Mitochondrial import inner membrane translocase subunit Tim29 from Homo sapiens (Human).